We begin with the raw amino-acid sequence, 252 residues long: Trans-aconitate 2-methyltransferase (252 aa).

Belongs to the methyltransferase superfamily. Tam family.

The protein resides in the cytoplasm. It carries out the reaction trans-aconitate + S-adenosyl-L-methionine = (E)-3-(methoxycarbonyl)pent-2-enedioate + S-adenosyl-L-homocysteine. In terms of biological role, catalyzes the S-adenosylmethionine monomethyl esterification of trans-aconitate. The protein is Trans-aconitate 2-methyltransferase of Escherichia coli (strain SE11).